We begin with the raw amino-acid sequence, 41 residues long: Large ribosomal subunit protein bL36 (41 aa).

This sequence belongs to the bacterial ribosomal protein bL36 family.

This is Large ribosomal subunit protein bL36 from Hydrogenovibrio crunogenus (strain DSM 25203 / XCL-2) (Thiomicrospira crunogena).